The sequence spans 1583 residues: Mediator of RNA polymerase II transcription subunit 12 (1583 aa).

Disordered regions lie at residues 1–117 (MIPH…SLSW) and 1481–1525 (SNIP…SGIP). Residues 66–79 (DTSEREPPSKRLRL) show a composition bias toward basic and acidic residues. 2 stretches are compositionally biased toward low complexity: residues 102 to 114 (TPST…KPSS) and 1490 to 1514 (PSPA…GSST).

The protein belongs to the Mediator complex subunit 12 family. Component of the srb8-11 complex, which itself associates with the Mediator complex.

The protein localises to the nucleus. Component of the srb8-11 complex. The srb8-11 complex is a regulatory module of the Mediator complex which is itself involved in regulation of basal and activated RNA polymerase II-dependent transcription. The srb8-11 complex may be involved in the transcriptional repression of a subset of genes regulated by Mediator. It may inhibit the association of the Mediator complex with RNA polymerase II to form the holoenzyme complex. The protein is Mediator of RNA polymerase II transcription subunit 12 (srb8) of Aspergillus terreus (strain NIH 2624 / FGSC A1156).